Consider the following 101-residue polypeptide: Large ribosomal subunit protein uL24 (101 aa).

It belongs to the universal ribosomal protein uL24 family. As to quaternary structure, part of the 50S ribosomal subunit.

Functionally, one of two assembly initiator proteins, it binds directly to the 5'-end of the 23S rRNA, where it nucleates assembly of the 50S subunit. One of the proteins that surrounds the polypeptide exit tunnel on the outside of the subunit. The chain is Large ribosomal subunit protein uL24 from Borrelia turicatae (strain 91E135).